Reading from the N-terminus, the 128-residue chain is 14 kDa zinc-binding protein (128 aa).

An HIT domain is found at 18-128; the sequence is IFDKIIKKEI…GGRQMNWPPG (111 aa). Residues 112-116 carry the Histidine triad motif motif; sequence HIHVH.

As to quaternary structure, homodimer.

This chain is 14 kDa zinc-binding protein (ZBP14), found in Zea mays (Maize).